Here is a 410-residue protein sequence, read N- to C-terminus: Mating-type locus allele B5 protein (410 aa).

A variable domain between B alleles region spans residues 1–110; that stretch reads MSSDPNFSLT…FNVVSPAVVC (110 aa). A DNA-binding region (homeobox; TALE-type) is located at residues 107–184; it reads AVVCRNLSED…NARRRSGWSH (78 aa). The highly conserved between B alleles stretch occupies residues 111–410; that stretch reads RNLSEDLPAY…PFLCLSVAFV (300 aa). Disordered regions lie at residues 201-241, 275-336, and 366-395; these read VRAK…TPAD, NKKT…PELS, and ILQS…PDEV. Over residues 206–222 the composition is skewed to low complexity; the sequence is SSSNQSTPPSPTSEYPS. The short motif at 276 to 308 is the Nuclear localization signal element; it reads KKTPKPGMPRPVTTVTKRQPARKTKPAAKPKSR. Basic residues predominate over residues 294-307; that stretch reads QPARKTKPAAKPKS. Polar residues predominate over residues 312–336; sequence PRASTTPSIDSTLDSSKLESTPELS. Positions 333–410 are not essential for B5 function; the sequence is PELSMCSTAD…PFLCLSVAFV (78 aa). Over residues 375 to 388 the composition is skewed to basic residues; the sequence is RGNRKVKALPKRAG.

This sequence belongs to the TALE/M-ATYP homeobox family.

The protein resides in the nucleus. In terms of biological role, the B locus has at least 25 alleles, and any combination of two different B alleles yields a multimeric regulatory protein, that activates genes responsible for the pathogenicity and for the sexual development of the fungus within the corn plant. The protein is Mating-type locus allele B5 protein of Mycosarcoma maydis (Corn smut fungus).